A 224-amino-acid chain; its full sequence is uncharacterized protein (224 aa).

A helical membrane pass occupies residues 21–41 (LTVILIIPIVYLGVCGCFEIV).

Its subcellular location is the membrane. This is an uncharacterized protein from Methanocaldococcus jannaschii (strain ATCC 43067 / DSM 2661 / JAL-1 / JCM 10045 / NBRC 100440) (Methanococcus jannaschii).